The sequence spans 172 residues: Dual-action ribosomal maturation protein DarP (172 aa).

The protein belongs to the DarP family.

It is found in the cytoplasm. Functionally, member of a network of 50S ribosomal subunit biogenesis factors which assembles along the 30S-50S interface, preventing incorrect 23S rRNA structures from forming. Promotes peptidyl transferase center (PTC) maturation. This is Dual-action ribosomal maturation protein DarP from Azotobacter vinelandii (strain DJ / ATCC BAA-1303).